Reading from the N-terminus, the 129-residue chain is Small ribosomal subunit protein uS11 (129 aa).

This sequence belongs to the universal ribosomal protein uS11 family. In terms of assembly, part of the 30S ribosomal subunit. Interacts with proteins S7 and S18. Binds to IF-3.

In terms of biological role, located on the platform of the 30S subunit, it bridges several disparate RNA helices of the 16S rRNA. Forms part of the Shine-Dalgarno cleft in the 70S ribosome. This Tolumonas auensis (strain DSM 9187 / NBRC 110442 / TA 4) protein is Small ribosomal subunit protein uS11.